Here is a 511-residue protein sequence, read N- to C-terminus: Ulvan-active sulfatase (511 aa).

The signal sequence occupies residues 1–34; sequence MNFKQNIVYKKMAISMKITAIRPIALVISFTLLS. Residue Cys35 is the site of N-palmitoyl cysteine attachment. Residue Cys35 is the site of S-diacylglycerol cysteine attachment. Ca(2+)-binding residues include Asp59 and Cys99. Catalysis depends on Cys99, which acts as the Nucleophile. Cys99 is modified (3-oxoalanine (Cys)). His149 is an active-site residue. Asp305 lines the Ca(2+) pocket.

This sequence belongs to the sulfatase family. Requires Ca(2+) as cofactor. Post-translationally, the conversion to 3-oxoalanine (also known as C-formylglycine, FGly), of a serine or cysteine residue in prokaryotes and of a cysteine residue in eukaryotes, is critical for catalytic activity. This post-translational modification is severely defective in multiple sulfatase deficiency (MSD).

It localises to the cell membrane. Sulfatase involved in ulvan degradation. Ulvan is the main polysaccharide component of the Ulvales (green seaweed) cell wall. It is composed of disaccharide building blocks comprising 3-sulfated rhamnose (Rha3S) linked to D-glucuronic acid (GlcA), L-iduronic acid (IduA), or D-xylose (Xyl). This chain is Ulvan-active sulfatase, found in Formosa agariphila (strain DSM 15362 / KCTC 12365 / LMG 23005 / KMM 3901 / M-2Alg 35-1).